The primary structure comprises 126 residues: Large ribosomal subunit protein bL12 (126 aa).

It belongs to the bacterial ribosomal protein bL12 family. Homodimer. Part of the ribosomal stalk of the 50S ribosomal subunit. Forms a multimeric L10(L12)X complex, where L10 forms an elongated spine to which 2 to 4 L12 dimers bind in a sequential fashion. Binds GTP-bound translation factors.

Functionally, forms part of the ribosomal stalk which helps the ribosome interact with GTP-bound translation factors. Is thus essential for accurate translation. The sequence is that of Large ribosomal subunit protein bL12 from Nitrosococcus oceani (strain ATCC 19707 / BCRC 17464 / JCM 30415 / NCIMB 11848 / C-107).